A 154-amino-acid chain; its full sequence is dCTP deaminase (154 aa).

DCTP is bound by residues 79–84 (RSSLAR), D95, Q124, and Y138.

This sequence belongs to the dCTP deaminase family. Homotrimer.

It catalyses the reaction dCTP + H2O + H(+) = dUTP + NH4(+). The protein operates within pyrimidine metabolism; dUMP biosynthesis; dUMP from dCTP (dUTP route): step 1/2. Catalyzes the deamination of dCTP to dUTP. The protein is dCTP deaminase of Pyrococcus abyssi (strain GE5 / Orsay).